Reading from the N-terminus, the 328-residue chain is UPF0421 protein SE_1574 (328 aa).

A run of 4 helical transmembrane segments spans residues 26-46 (LFCMLLNLTPIFAILTAIVTI), 61-81 (LPATVIGALFAVVFTYVFGDQ), 109-129 (AVLTSVAMIPSIHEAYVFNFF), and 132-152 (LLTALIGLVTAGLVNFIILPP).

The protein belongs to the UPF0421 family.

Its subcellular location is the cell membrane. This is UPF0421 protein SE_1574 from Staphylococcus epidermidis (strain ATCC 12228 / FDA PCI 1200).